The primary structure comprises 397 residues: Riboflavin biosynthesis protein RibBA (397 aa).

The segment at 1 to 199 (MFHRIEEALE…IEDLIAYRRH (199 aa)) is DHBP synthase. D-ribulose 5-phosphate-binding positions include 26-27 (RE), aspartate 31, 138-142 (RAGHT), and glutamate 162. Glutamate 27 is a binding site for Mg(2+). A Mg(2+)-binding site is contributed by histidine 141. The GTP cyclohydrolase II stretch occupies residues 200–397 (HETLVTREVE…VNKLGHLLNL (198 aa)). 250–254 (RVHSE) provides a ligand contact to GTP. Positions 255, 266, and 268 each coordinate Zn(2+). GTP contacts are provided by residues glutamine 271, 293–295 (EGR), and threonine 315. Aspartate 327 (proton acceptor; for GTP cyclohydrolase activity) is an active-site residue. The active-site Nucleophile; for GTP cyclohydrolase activity is arginine 329. The GTP site is built by threonine 350 and lysine 355.

In the N-terminal section; belongs to the DHBP synthase family. This sequence in the C-terminal section; belongs to the GTP cyclohydrolase II family. The cofactor is Mg(2+). Mn(2+) is required as a cofactor. Zn(2+) serves as cofactor.

The enzyme catalyses D-ribulose 5-phosphate = (2S)-2-hydroxy-3-oxobutyl phosphate + formate + H(+). It carries out the reaction GTP + 4 H2O = 2,5-diamino-6-hydroxy-4-(5-phosphoribosylamino)-pyrimidine + formate + 2 phosphate + 3 H(+). Its pathway is cofactor biosynthesis; riboflavin biosynthesis; 2-hydroxy-3-oxobutyl phosphate from D-ribulose 5-phosphate: step 1/1. It participates in cofactor biosynthesis; riboflavin biosynthesis; 5-amino-6-(D-ribitylamino)uracil from GTP: step 1/4. Functionally, catalyzes the conversion of D-ribulose 5-phosphate to formate and 3,4-dihydroxy-2-butanone 4-phosphate. Its function is as follows. Catalyzes the conversion of GTP to 2,5-diamino-6-ribosylamino-4(3H)-pyrimidinone 5'-phosphate (DARP), formate and pyrophosphate. The chain is Riboflavin biosynthesis protein RibBA from Bacillus cereus (strain G9842).